We begin with the raw amino-acid sequence, 371 residues long: Liposome tubulation protein MamY (371 aa).

The Cytoplasmic segment spans residues 1–18 (MLMNFVNNVSKTINGGAR). The chain crosses the membrane as a helical span at residues 19 to 39 (IVYVGSFSWAVLSLLFVTAFS). Residues 40-51 (GWNNIFSMLPHE) lie on the Lumenal side of the membrane. The helical transmembrane segment at 52–72 (IFILVLTISLPIALIVLIFML) threads the bilayer. Topologically, residues 73 to 371 (SQIVRTVESV…LIDGTPISDA (299 aa)) are cytoplasmic.

Belongs to the magnetosome MamY family. As to quaternary structure, probably interacts with MamX and MamZ proteins.

Its subcellular location is the magnetosome membrane. Its function is as follows. May be involved in constriction of the cell inner membrane to form mature magnetosomes. Binds cardiolipin and liposomes. May function with MamX, MamZ amd Mms6 in biomineralization. This chain is Liposome tubulation protein MamY, found in Magnetospirillum gryphiswaldense (strain DSM 6361 / JCM 21280 / NBRC 15271 / MSR-1).